A 94-amino-acid polypeptide reads, in one-letter code: Signal peptidase complex subunit 1 (94 aa).

N-acetylserine is present on Ser-2. Over 2–28 (SEILQDVQRKLVFPIDFPSQRKTEKFQ) the chain is Cytoplasmic. Residues 29 to 49 (QLSLMIGALVACILGFAQQSL) form a helical membrane-spanning segment. Residue Lys-50 is a topological domain, lumenal. The chain crosses the membrane as a helical span at residues 51–71 (VLLTAYGISCVITLICVLPAY). Over 72–94 (PWYNKQKLRWAQPKIEINVDQYD) the chain is Cytoplasmic.

Belongs to the SPCS1 family. In terms of assembly, component of the signal peptidase complex (SPC) composed of a catalytic subunit SEC11 and three accessory subunits SPC1, SPC2 and SPC3. The complex induces a local thinning of the ER membrane which is used to measure the length of the signal peptide (SP) h-region of protein substrates. This ensures the selectivity of the complex towards h-regions shorter than 18-20 amino acids. SPC associates with the translocon complex. Interacts with SBH1 and SEB2/SBH2.

It is found in the endoplasmic reticulum membrane. Functionally, component of the signal peptidase complex (SPC) which catalyzes the cleavage of N-terminal signal sequences from nascent proteins as they are translocated into the lumen of the endoplasmic reticulum. Dispensable for SPC enzymatic activity. The sequence is that of Signal peptidase complex subunit 1 (SPC1) from Saccharomyces cerevisiae (strain ATCC 204508 / S288c) (Baker's yeast).